The sequence spans 433 residues: Poly(A) ribonuclease POP2 (433 aa).

Position 1 is an N-acetylmethionine (methionine 1). The tract at residues 78–98 (LLTQQQQQQQQQQQPFNIGTP) is disordered. Residues 81–91 (QQQQQQQQQQQ) are compositionally biased toward low complexity. The residue at position 97 (threonine 97) is a Phosphothreonine; by YAK1. A divalent metal cation contacts are provided by serine 188, glutamate 190, aspartate 310, and glutamine 394.

Belongs to the CAF1 family. In terms of assembly, subunit of the 1.0 MDa CCR4-NOT core complex that contains CCR4, CAF1, NOT1, NOT2, NOT3, NOT4, NOT5, CAF40 and CAF130. In the complex interacts with NOT1. The core complex probably is part of a less characterized 1.9 MDa CCR4-NOT complex. It depends on Mg(2+) as a cofactor.

It localises to the cytoplasm. The protein localises to the nucleus. It catalyses the reaction Exonucleolytic cleavage of poly(A) to 5'-AMP.. Functionally, acts as a probably catalytic component of the CCR4-NOT core complex, which in the nucleus seems to be a general transcription factor, and in the cytoplasm the major mRNA deadenylase involved in mRNA turnover. In vitro, POP2 has 3'-exoribonuclease activity with a preference for poly(A) RNAs, but also degrades poly(U) and poly(C) RNAs. Is part of a glucose-sensing system involved in growth control in response to glucose availability. This Saccharomyces cerevisiae (strain ATCC 204508 / S288c) (Baker's yeast) protein is Poly(A) ribonuclease POP2 (POP2).